Consider the following 255-residue polypeptide: Hydroxyacylglutathione hydrolase (255 aa).

The Zn(2+) site is built by His-56, His-58, Asp-60, His-61, His-114, Asp-133, and His-171.

Belongs to the metallo-beta-lactamase superfamily. Glyoxalase II family. Monomer. The cofactor is Zn(2+).

It catalyses the reaction an S-(2-hydroxyacyl)glutathione + H2O = a 2-hydroxy carboxylate + glutathione + H(+). It participates in secondary metabolite metabolism; methylglyoxal degradation; (R)-lactate from methylglyoxal: step 2/2. Its function is as follows. Thiolesterase that catalyzes the hydrolysis of S-D-lactoyl-glutathione to form glutathione and D-lactic acid. This Mesorhizobium japonicum (strain LMG 29417 / CECT 9101 / MAFF 303099) (Mesorhizobium loti (strain MAFF 303099)) protein is Hydroxyacylglutathione hydrolase.